Here is a 93-residue protein sequence, read N- to C-terminus: NADH-dependent phenylglyoxylate dehydrogenase subunit delta (93 aa).

2 4Fe-4S ferredoxin-type domains span residues 39–68 (MRPV…EHAA) and 66–93 (HAAW…RRSR).

As to quaternary structure, dimer of heteropentamers composed of an alpha (PadG), a beta (PadI), a gamma (PadE), a delta (PadF) and an epsilon (PadH) subunit. Requires [4Fe-4S] cluster as cofactor.

It catalyses the reaction phenylglyoxylate + NAD(+) + CoA = benzoyl-CoA + CO2 + NADH. Its activity is regulated as follows. Activated by magnesium ions and thiamine diphosphate. Involved in the anaerobic metabolism of phenylalanine and phenylacetate. Catalyzes the oxidative decarboxylation of phenylglyoxylate to benzoyl-CoA and CO(2). It can also react slowly with 2-oxo-3-methylbutanoate and use different electron acceptors such as benzyl viologen, methyl viologen, FAD or FMN, but NAD seems to be the physiological electron acceptor. Also catalyzes an isotope exchange between CO(2) and the carboxyl group which proves partial or complete reversibility of the oxidative decarboxylation reaction. The chain is NADH-dependent phenylglyoxylate dehydrogenase subunit delta (padF) from Aromatoleum evansii (Azoarcus evansii).